Here is a 574-residue protein sequence, read N- to C-terminus: Proline--tRNA ligase (574 aa).

Belongs to the class-II aminoacyl-tRNA synthetase family. ProS type 1 subfamily. As to quaternary structure, homodimer.

It localises to the cytoplasm. It carries out the reaction tRNA(Pro) + L-proline + ATP = L-prolyl-tRNA(Pro) + AMP + diphosphate. Its function is as follows. Catalyzes the attachment of proline to tRNA(Pro) in a two-step reaction: proline is first activated by ATP to form Pro-AMP and then transferred to the acceptor end of tRNA(Pro). As ProRS can inadvertently accommodate and process non-cognate amino acids such as alanine and cysteine, to avoid such errors it has two additional distinct editing activities against alanine. One activity is designated as 'pretransfer' editing and involves the tRNA(Pro)-independent hydrolysis of activated Ala-AMP. The other activity is designated 'posttransfer' editing and involves deacylation of mischarged Ala-tRNA(Pro). The misacylated Cys-tRNA(Pro) is not edited by ProRS. In Desulfovibrio desulfuricans (strain ATCC 27774 / DSM 6949 / MB), this protein is Proline--tRNA ligase.